Consider the following 268-residue polypeptide: Ribosomal RNA large subunit methyltransferase E (268 aa).

5 residues coordinate S-adenosyl-L-methionine: glycine 50, tryptophan 52, aspartate 68, aspartate 84, and aspartate 109. Residue lysine 149 is the Proton acceptor of the active site. The TRAM domain occupies 196–254; that stretch reads PLRKGDKFVVDIEKLGSSGDGAVLIEGFVVFVKEVEVGEKVRIKISDVKPNFAFADVEE.

This sequence belongs to the class I-like SAM-binding methyltransferase superfamily. RNA methyltransferase RlmE family.

The protein localises to the cytoplasm. The enzyme catalyses uridine(2552) in 23S rRNA + S-adenosyl-L-methionine = 2'-O-methyluridine(2552) in 23S rRNA + S-adenosyl-L-homocysteine + H(+). Its function is as follows. Specifically methylates the uridine in position 2552 of 23S rRNA at the 2'-O position of the ribose in the fully assembled 50S ribosomal subunit. This Methanosarcina mazei (strain ATCC BAA-159 / DSM 3647 / Goe1 / Go1 / JCM 11833 / OCM 88) (Methanosarcina frisia) protein is Ribosomal RNA large subunit methyltransferase E.